Here is a 241-residue protein sequence, read N- to C-terminus: Small ribosomal subunit protein uS2c (241 aa).

This sequence belongs to the universal ribosomal protein uS2 family.

It localises to the plastid. Its subcellular location is the chloroplast. This chain is Small ribosomal subunit protein uS2c (rps2), found in Porphyra purpurea (Red seaweed).